Reading from the N-terminus, the 1508-residue chain is Ras guanine nucleotide exchange factor Y (1508 aa).

Disordered regions lie at residues 1–73 (MIII…NNNE), 128–182 (KVLS…PKSV), 197–272 (IDNN…YSTS), 396–517 (ILQC…EDED), 565–593 (LSEN…SIPT), 606–727 (LPNI…AEPS), 831–1021 (NVII…SNKE), and 1153–1172 (TNED…TNKN). 2 stretches are compositionally biased toward low complexity: residues 9-22 (NINN…NNNS) and 33-72 (NNNN…NNNN). Polar residues-rich tracts occupy residues 128–150 (KVLS…TNTI) and 172–182 (DRTSQDIPKSV). Residues 199–216 (NNTTNNNSNNNNNSSLST) are compositionally biased toward low complexity. The segment covering 223–232 (DSLETNPIKD) has biased composition (basic and acidic residues). The segment covering 233-250 (EESEESEESEESKEEEEE) has biased composition (acidic residues). Over residues 255 to 272 (IKTTKTTSETIESSYSTS) the composition is skewed to low complexity. Residues 399 to 409 (CKDDSSSKDQD) are compositionally biased toward basic and acidic residues. Positions 413–447 (NNSAGSSGNSSASNSNRNSIAFSSSNHFSSESSQS) are enriched in low complexity. Residues 465–475 (PQSPSPSPSPP) show a composition bias toward pro residues. The span at 492–510 (FNQQTNFSVSPTKSPSNEK) shows a compositional bias: polar residues. 8 stretches are compositionally biased toward low complexity: residues 574-593 (NQPS…SIPT), 606-660 (LPNI…LTES), 668-687 (NNNN…NNNN), 831-855 (NVII…NTVK), 862-891 (NKSS…SLTP), 942-984 (SLWS…SPPT), 993-1019 (ITTG…NNSN), and 1160-1172 (SNSN…TNKN). Positions 659-686 (ESLKTRIEENNNNNNNKNINNNNNNNNN) form a coiled coil. In terms of domain architecture, N-terminal Ras-GEF spans 1074–1234 (NRIKVRSASL…IILKIIDRKA (161 aa)). Residues 1278-1508 (DDLEIARQLT…LYKQSKIIEP (231 aa)) enclose the Ras-GEF domain.

Its function is as follows. Promotes the exchange of Ras-bound GDP by GTP. This chain is Ras guanine nucleotide exchange factor Y (gefY), found in Dictyostelium discoideum (Social amoeba).